The primary structure comprises 674 residues: Probable L-type lectin-domain containing receptor kinase II.1 (674 aa).

A signal peptide spans 1–24 (MAGVLGSVVFWLIIGIHVTFLVFA). The Extracellular segment spans residues 25–301 (QEGDHFVYYD…PSPKRFPLKE (277 aa)). Residues 28-274 (DHFVYYDFRN…NQYILGWSFK (247 aa)) are legume-lectin like. N-linked (GlcNAc...) asparagine glycosylation is found at N57, N117, N133, N185, N210, and N242. Residues 302–322 (VLGATISTIAFLTLGGIVYLY) form a helical membrane-spanning segment. At 323–674 (KKKKYAEVLE…EDVTVLFGGR (352 aa)) the chain is on the cytoplasmic side. Residues 355-633 (FRENQLLGAG…LEGNVSVPAI (279 aa)) form the Protein kinase domain. ATP-binding positions include 361–369 (LGAGGFGKV) and K383. D480 acts as the Proton acceptor in catalysis.

In the C-terminal section; belongs to the protein kinase superfamily. Ser/Thr protein kinase family. The protein in the N-terminal section; belongs to the leguminous lectin family.

The protein localises to the cell membrane. The catalysed reaction is L-seryl-[protein] + ATP = O-phospho-L-seryl-[protein] + ADP + H(+). It carries out the reaction L-threonyl-[protein] + ATP = O-phospho-L-threonyl-[protein] + ADP + H(+). This chain is Probable L-type lectin-domain containing receptor kinase II.1 (LECRK21), found in Arabidopsis thaliana (Mouse-ear cress).